The following is a 110-amino-acid chain: uncharacterized protein (110 aa).

It localises to the plastid. The protein resides in the chloroplast. This is an uncharacterized protein from Auxenochlorella pyrenoidosa (Freshwater green alga).